The sequence spans 444 residues: Endoglucanase N (444 aa).

The N-terminal stretch at 1–31 is a signal peptide; sequence MWMRRNQIVRKLTLGVVTTVLGMSLSFSALS. Residues His64, 68–69, Tyr95, and His130 each bind substrate; that span reads WF. The active-site Proton donor is the Glu168. Position 230 (Tyr230) interacts with substrate. Catalysis depends on Glu256, which acts as the Nucleophile. Substrate is bound by residues 262-263, Trp290, and 295-297; these read AS and KSE. The segment at 332-358 is disordered; that stretch reads ANLGGGDTPTTPTTPTEPTNPGNGTTG. Low complexity predominate over residues 339–358; the sequence is TPTTPTTPTEPTNPGNGTTG. A CBM3 domain is found at 356 to 444; sequence TTGDVVLQYR…DKANRYVLVT (89 aa).

This sequence belongs to the glycosyl hydrolase 5 (cellulase A) family.

It localises to the secreted. It carries out the reaction Endohydrolysis of (1-&gt;4)-beta-D-glucosidic linkages in cellulose, lichenin and cereal beta-D-glucans.. This Pectobacterium atrosepticum (Erwinia carotovora subsp. atroseptica) protein is Endoglucanase N (celN).